Consider the following 324-residue polypeptide: Glyoxylate/hydroxypyruvate reductase B (324 aa).

Active-site residues include arginine 237 and glutamate 266. Histidine 285 acts as the Proton donor in catalysis.

Belongs to the D-isomer specific 2-hydroxyacid dehydrogenase family. GhrB subfamily. In terms of assembly, homodimer.

It localises to the cytoplasm. The catalysed reaction is glycolate + NADP(+) = glyoxylate + NADPH + H(+). The enzyme catalyses (R)-glycerate + NAD(+) = 3-hydroxypyruvate + NADH + H(+). It catalyses the reaction (R)-glycerate + NADP(+) = 3-hydroxypyruvate + NADPH + H(+). In terms of biological role, catalyzes the NADPH-dependent reduction of glyoxylate and hydroxypyruvate into glycolate and glycerate, respectively. This Shigella dysenteriae serotype 1 (strain Sd197) protein is Glyoxylate/hydroxypyruvate reductase B.